An 832-amino-acid polypeptide reads, in one-letter code: SID1 transmembrane family member 2 (832 aa).

Positions 1 to 18 are cleaved as a signal peptide; the sequence is MIAWRLPLCVLLVASVES. Over 19 to 293 the chain is Extracellular; that stretch reads HLGALGPKNV…VSQAVTSEAY (275 aa). N-linked (GlcNAc...) asparagine glycosylation is found at Asn-27, Asn-54, Asn-60, Asn-123, Asn-141, and Asn-165. A helical transmembrane segment spans residues 294–314; that stretch reads VGGMLFCLGIFLSFYLLTVLL. The Cytoplasmic portion of the chain corresponds to 315 to 447; that stretch reads ACWENWRQRK…DKRVLRKKYQ (133 aa). 3 positions are modified to phosphoserine: Ser-401, Ser-403, and Ser-404. The helical transmembrane segment at 448–468 threads the bilayer; the sequence is IYFWNIATIAVFYALPVVQLV. The Extracellular segment spans residues 469–499; the sequence is ITYQTVVNVTGNQDICYYNFLCAHPLGNLSA. N-linked (GlcNAc...) asparagine glycans are attached at residues Asn-476 and Asn-496. A helical transmembrane segment spans residues 500–520; sequence FNNILSNLGYILLGLLFLLII. Topologically, residues 521-546 are cytoplasmic; the sequence is LQREINHNRALLRNDLYALECGIPKH. The chain crosses the membrane as a helical span at residues 547–567; that stretch reads FGLFYAMGTALMMEGLLSACY. The Extracellular segment spans residues 568–605; the sequence is HVCPNYTNFQFDTSFMYMIAGLCMLKLYQKRHPDINAS. N-linked (GlcNAc...) asparagine glycosylation is found at Asn-572 and Asn-603. A helical membrane pass occupies residues 606–626; the sequence is AYSAYACLAIVIFFSVLGVVF. At 627 to 631 the chain is on the cytoplasmic side; the sequence is GKGNT. Residues 632–652 form a helical membrane-spanning segment; that stretch reads AFWIVFSVIHIISTLLLSTQL. Topologically, residues 653-688 are extracellular; sequence YYMGRWKLDSGIFRRILHVLYTDCIRQCSGPLYTDR. Residues 689 to 709 form a helical membrane-spanning segment; it reads MVLLVMGNIINWSLAAYGLIM. Over 710 to 715 the chain is Cytoplasmic; sequence RPNDFA. The chain crosses the membrane as a helical span at residues 716–736; the sequence is SYLLAIGICNLLLYFAFYIIM. The Extracellular segment spans residues 737–746; sequence KLRSGERIKL. The chain crosses the membrane as a helical span at residues 747 to 767; it reads IPLLCIVCTSVVWGFALFFFF. At 768–796 the chain is on the cytoplasmic side; sequence QGLSTWQKTPAESREHNRDCILLDFFDDH. The helical transmembrane segment at 797 to 817 threads the bilayer; that stretch reads DIWHFLSSIAMFGSFLVLLTL. Topologically, residues 818 to 832 are extracellular; sequence DDDLDTVQRDKIYVF.

It belongs to the SID1 family. In terms of assembly, interacts with adapter protein complex 1 (AP-1) and AP-2, but not AP-3 and AP-4. Interacts with LAMP2. In terms of processing, glycosylated. Widely expressed, including in the liver, brain and kidney (at protein level).

Its subcellular location is the lysosome membrane. It localises to the cell membrane. Mediates the translocation of RNA and DNA across the lysosomal membrane during RNA and DNA autophagy (RDA), a process in which RNA and DNA is directly imported into lysosomes in an ATP-dependent manner, and degraded. Involved in the uptake of single-stranded oligonucleotides by living cells, a process called gymnosis. In vitro, mediates the uptake of linear DNA more efficiently than that of circular DNA, but exhibits similar uptake efficacy toward RNA and DNA. Binds long double-stranded RNA (dsRNA) (500 - 700 base pairs), but not dsRNA shorter than 100 bp. This Mus musculus (Mouse) protein is SID1 transmembrane family member 2 (Sidt2).